Reading from the N-terminus, the 379-residue chain is Cytochrome b (379 aa).

4 helical membrane-spanning segments follow: residues 34 to 54 (LGSLLGMCLMIQIVTGLFLTM), 78 to 99 (WLIRTLHANGASMFFICMYLHV), 114 to 134 (WMTGTIILFLVMATAFMGYVL), and 179 to 199 (FYTFHFVLPFIVMAMVMIHLF). Residues His84 and His98 each coordinate heme b. Heme b contacts are provided by His183 and His197. His202 lines the a ubiquinone pocket. 4 consecutive transmembrane segments (helical) span residues 227 to 247 (YKDMITFIILMMILIMLCLID), 289 to 309 (LGGVIALVMSISILMIMPFYN), 321 to 341 (MNQIMFWIMVIVICLLTWIGK), and 348 to 368 (YIMTGQILTIIYFSYFLFNVH).

Belongs to the cytochrome b family. The main subunits of complex b-c1 are: cytochrome b, cytochrome c1 and the Rieske protein. Heme b is required as a cofactor.

It is found in the mitochondrion inner membrane. Functionally, component of the ubiquinol-cytochrome c reductase complex (complex III or cytochrome b-c1 complex) that is part of the mitochondrial respiratory chain. The b-c1 complex mediates electron transfer from ubiquinol to cytochrome c. Contributes to the generation of a proton gradient across the mitochondrial membrane that is then used for ATP synthesis. This chain is Cytochrome b (MT-CYB), found in Locusta migratoria (Migratory locust).